The sequence spans 321 residues: Lipoyl synthase (321 aa).

Positions 68, 73, 79, 94, 98, 101, and 308 each coordinate [4Fe-4S] cluster. Residues 80 to 297 form the Radical SAM core domain; sequence FNHGTATFMI…KAEALAMGFT (218 aa).

This sequence belongs to the radical SAM superfamily. Lipoyl synthase family. [4Fe-4S] cluster is required as a cofactor.

Its subcellular location is the cytoplasm. It catalyses the reaction [[Fe-S] cluster scaffold protein carrying a second [4Fe-4S](2+) cluster] + N(6)-octanoyl-L-lysyl-[protein] + 2 oxidized [2Fe-2S]-[ferredoxin] + 2 S-adenosyl-L-methionine + 4 H(+) = [[Fe-S] cluster scaffold protein] + N(6)-[(R)-dihydrolipoyl]-L-lysyl-[protein] + 4 Fe(3+) + 2 hydrogen sulfide + 2 5'-deoxyadenosine + 2 L-methionine + 2 reduced [2Fe-2S]-[ferredoxin]. It functions in the pathway protein modification; protein lipoylation via endogenous pathway; protein N(6)-(lipoyl)lysine from octanoyl-[acyl-carrier-protein]: step 2/2. Its function is as follows. Catalyzes the radical-mediated insertion of two sulfur atoms into the C-6 and C-8 positions of the octanoyl moiety bound to the lipoyl domains of lipoate-dependent enzymes, thereby converting the octanoylated domains into lipoylated derivatives. The sequence is that of Lipoyl synthase from Salmonella arizonae (strain ATCC BAA-731 / CDC346-86 / RSK2980).